Reading from the N-terminus, the 365-residue chain is Serpentine receptor class epsilon-38 (365 aa).

The next 7 helical transmembrane spans lie at 26–46, 65–85, 124–144, 168–188, 196–216, 256–276, and 285–305; these read GMYL…GVII, IMTA…LLII, ALVI…FGIL, IPVF…YFVL, LGTS…LAVW, LVIV…CLVI, and IFIH…CSTL.

It belongs to the nematode receptor-like protein sre family.

It is found in the membrane. In Caenorhabditis elegans, this protein is Serpentine receptor class epsilon-38 (sre-38).